The primary structure comprises 147 residues: CLAVATA3/ESR (CLE)-related protein 4C (147 aa).

The first 21 residues, 1 to 21 (MATNTMLCLFVISVVLALAFA), serve as a signal peptide directing secretion. The interval 21–83 (ATNKKGDEEP…SNQLPNNNWM (63 aa)) is required for secretion from the host cytoplasm to the host apoplasm. Asparagine 32 carries an N-linked (GlcNAc...) asparagine glycan. Disordered regions lie at residues 57 to 86 (GADATRGGGAVYGGNLKSNQLPNNNWMAPP) and 116 to 147 (RKTGMHSQRHHEETTLEQEKRVAGAGPDPIHH). The segment covering 125–137 (HHEETTLEQEKRV) has biased composition (basic and acidic residues). A CLE motif is present at residues 136–147 (RVAGAGPDPIHH).

This sequence belongs to the CLV3/ESR signal peptide family. As to expression, highly expressed exclusively within the dorsal esophageal gland cell during syncytium formation in host plants.

Its subcellular location is the secreted. It localises to the host cytoplasm. The protein localises to the host extracellular space. It is found in the extracellular space. The protein resides in the apoplast. In terms of biological role, mimics host plant CLE extracellular signal peptides that regulate cell fate. May play a role in the differentiation or division of feeding cells (syncytia) induced in plant roots during infection. This Globodera rostochiensis (Golden nematode worm) protein is CLAVATA3/ESR (CLE)-related protein 4C (CLE-4C).